Consider the following 1042-residue polypeptide: Isoleucine--tRNA ligase (1042 aa).

The 'HIGH' region signature appears at 48 to 58; it reads PFATGLPHFGH. The 'KMSKS' region motif lies at 594–598; that stretch reads KMSKS. ATP is bound at residue lysine 597.

The protein belongs to the class-I aminoacyl-tRNA synthetase family. IleS type 2 subfamily. In terms of assembly, monomer. The cofactor is Zn(2+).

The protein localises to the cytoplasm. It carries out the reaction tRNA(Ile) + L-isoleucine + ATP = L-isoleucyl-tRNA(Ile) + AMP + diphosphate. Catalyzes the attachment of isoleucine to tRNA(Ile). As IleRS can inadvertently accommodate and process structurally similar amino acids such as valine, to avoid such errors it has two additional distinct tRNA(Ile)-dependent editing activities. One activity is designated as 'pretransfer' editing and involves the hydrolysis of activated Val-AMP. The other activity is designated 'posttransfer' editing and involves deacylation of mischarged Val-tRNA(Ile). The sequence is that of Isoleucine--tRNA ligase from Borreliella burgdorferi (strain ZS7) (Borrelia burgdorferi).